Here is a 152-residue protein sequence, read N- to C-terminus: Holo-[acyl-carrier-protein] synthase (152 aa).

Mg(2+) is bound by residues Asp7 and Glu60.

The protein belongs to the P-Pant transferase superfamily. AcpS family. Requires Mg(2+) as cofactor.

It is found in the cytoplasm. It catalyses the reaction apo-[ACP] + CoA = holo-[ACP] + adenosine 3',5'-bisphosphate + H(+). In terms of biological role, transfers the 4'-phosphopantetheine moiety from coenzyme A to a Ser of acyl-carrier-protein. The polypeptide is Holo-[acyl-carrier-protein] synthase (Bifidobacterium adolescentis (strain ATCC 15703 / DSM 20083 / NCTC 11814 / E194a)).